The following is a 381-amino-acid chain: Translation initiation factor eIF2B subunit beta (381 aa).

A disordered region spans residues 125–148 (LQKPEQPHQNRKNSSGSSSMKTKT). Residues 136–145 (KNSSGSSSMK) show a composition bias toward polar residues.

It belongs to the eIF-2B alpha/beta/delta subunits family. Component of the translation initiation factor 2B (eIF2B) complex which is a heterodecamer of two sets of five different subunits: alpha, beta, gamma, delta and epsilon. Subunits alpha, beta and delta comprise a regulatory subcomplex and subunits epsilon and gamma comprise a catalytic subcomplex. Within the complex, the hexameric regulatory complex resides at the center, with the two heterodimeric catalytic subcomplexes bound on opposite sides.

Its subcellular location is the cytoplasm. The protein localises to the cytosol. Functionally, acts as a component of the translation initiation factor 2B (eIF2B) complex, which catalyzes the exchange of GDP for GTP on the eukaryotic initiation factor 2 (eIF2) complex gamma subunit. Its guanine nucleotide exchange factor activity is repressed when bound to eIF2 complex phosphorylated on the alpha subunit, thereby limiting the amount of methionyl-initiator methionine tRNA available to the ribosome and consequently global translation is repressed. It activates the synthesis of GCN4 in yeast under amino acid starvation conditions by suppressing the inhibitory effects of multiple AUG codons present in the leader of GCN4 mRNA. It may promote either repression or activation of GCN4 expression depending on amino acid availability. GCD6 and GCD7 repress GCN4 expression at the translational level by ensuring that ribosomes which have translated UORF1 will reinitiate at UORF2, -3, or -4 and thus fail to reach the GCN4 start site. The sequence is that of Translation initiation factor eIF2B subunit beta (GCD7) from Saccharomyces cerevisiae (strain ATCC 204508 / S288c) (Baker's yeast).